We begin with the raw amino-acid sequence, 190 residues long: Xanthine phosphoribosyltransferase 2 (190 aa).

L20 and N27 together coordinate xanthine. Position 129-133 (A129–A133) interacts with 5-phospho-alpha-D-ribose 1-diphosphate. K157 serves as a coordination point for xanthine.

The protein belongs to the purine/pyrimidine phosphoribosyltransferase family. Xpt subfamily. Homodimer.

Its subcellular location is the cytoplasm. It carries out the reaction XMP + diphosphate = xanthine + 5-phospho-alpha-D-ribose 1-diphosphate. Its pathway is purine metabolism; XMP biosynthesis via salvage pathway; XMP from xanthine: step 1/1. Its function is as follows. Converts the preformed base xanthine, a product of nucleic acid breakdown, to xanthosine 5'-monophosphate (XMP), so it can be reused for RNA or DNA synthesis. This is Xanthine phosphoribosyltransferase 2 from Clostridium botulinum (strain Langeland / NCTC 10281 / Type F).